The primary structure comprises 484 residues: tRNA sulfurtransferase (484 aa).

One can recognise a THUMP domain in the interval 63–167 (DVFADRLACI…QDKLYMVERR (105 aa)). ATP contacts are provided by residues 185 to 186 (LI), lysine 267, glycine 289, and glutamine 298. Cysteine 346 and cysteine 458 form a disulfide bridge. The Rhodanese domain maps to 406–484 (VASGEIIIDV…GYTNVKVYRP (79 aa)). Cysteine 458 (cysteine persulfide intermediate) is an active-site residue.

The protein belongs to the ThiI family.

It is found in the cytoplasm. The catalysed reaction is [ThiI sulfur-carrier protein]-S-sulfanyl-L-cysteine + a uridine in tRNA + 2 reduced [2Fe-2S]-[ferredoxin] + ATP + H(+) = [ThiI sulfur-carrier protein]-L-cysteine + a 4-thiouridine in tRNA + 2 oxidized [2Fe-2S]-[ferredoxin] + AMP + diphosphate. It catalyses the reaction [ThiS sulfur-carrier protein]-C-terminal Gly-Gly-AMP + S-sulfanyl-L-cysteinyl-[cysteine desulfurase] + AH2 = [ThiS sulfur-carrier protein]-C-terminal-Gly-aminoethanethioate + L-cysteinyl-[cysteine desulfurase] + A + AMP + 2 H(+). Its pathway is cofactor biosynthesis; thiamine diphosphate biosynthesis. In terms of biological role, catalyzes the ATP-dependent transfer of a sulfur to tRNA to produce 4-thiouridine in position 8 of tRNAs, which functions as a near-UV photosensor. Also catalyzes the transfer of sulfur to the sulfur carrier protein ThiS, forming ThiS-thiocarboxylate. This is a step in the synthesis of thiazole, in the thiamine biosynthesis pathway. The sulfur is donated as persulfide by IscS. The polypeptide is tRNA sulfurtransferase (Shewanella frigidimarina (strain NCIMB 400)).